The chain runs to 284 residues: MFNGFRFNGNRIGDRRWFCGGGGEPVTGTNVRAMDRSQEKEAIKSPIPPAIRVRELSFAYGGQTPVLNNLAWQVAPGERLGIIGHNGCGKTTLFLLLCGLLKASAGTIQLLGQALEAGKFLPEVGFLFQNPTDQLFATSVWDDIAFGPQNMGLSPAQVTERVNQAAELTGITSLLDRLPQHLSGGEKQMVAIAGLLAMAPKILLCDEPTASLDIKARRQLINFLGQFQQTLLISSHDLEFVLEVCNRVIIIDQGQIVADGPAQEIMADQTLMESHGLEKPYSLR.

One can recognise an ABC transporter domain in the interval 51–278 (IRVRELSFAY…QTLMESHGLE (228 aa)). 84 to 91 (GHNGCGKT) contributes to the ATP binding site.

The protein belongs to the ABC transporter superfamily.

It is found in the cell inner membrane. Probably part of an ABC transporter complex. Responsible for energy coupling to the transport system. The polypeptide is Putative ABC transporter ATP-binding protein sll0385 (Synechocystis sp. (strain ATCC 27184 / PCC 6803 / Kazusa)).